Reading from the N-terminus, the 345-residue chain is Ubiquitin-associated domain-containing protein 2 (345 aa).

The signal sequence occupies residues 1 to 39; that stretch reads MFTSTGSSGLYKAPLSKSLLLVPSALSLLLTLLLPHCQK. Over 40–91 the chain is Extracellular; sequence FFVYDLHAVKHDLQIWRLICGRIICLDLKDAFCSGLLIYNFRIFERRYGSRK. A helical membrane pass occupies residues 92-112; sequence FASFLLGSWVLSALFDFILVE. The Cytoplasmic portion of the chain corresponds to 113–125; that stretch reads AVQYSLGVTVASN. A helical transmembrane segment spans residues 126-146; it reads LPSGFLAPVFALFVPFHCSIP. The Extracellular segment spans residues 147–163; the sequence is RVQVAQILGPLSITNKT. N-linked (GlcNAc...) asparagine glycosylation occurs at Asn161. A helical transmembrane segment spans residues 164 to 184; it reads LIYILGLQLFTSGSYIWIVAM. The Cytoplasmic segment spans residues 185–345; the sequence is SGLISGMCYD…NVATNFLLQH (161 aa). Positions 287–306 are disordered; the sequence is NINYQDGPRSEQRASPPLEV. In terms of domain architecture, UBA spans 305-345; the sequence is EVSEEQVARLMEMGFSRGDALEALRASNNDLNVATNFLLQH.

As to quaternary structure, interacts with LMBR1L, FAF2, AMFR and VCP.

The protein resides in the endoplasmic reticulum membrane. Its function is as follows. Restricts trafficking of FAF2 from the endoplasmic reticulum to lipid droplets. In association with LMBR1L and E3 ubiquitin-protein ligase AMFR, negatively regulates the canonical Wnt signaling pathway in the lymphocytes by promoting the ubiquitin-mediated degradation of CTNNB1 and Wnt receptors FZD6 and LRP6. In Mus musculus (Mouse), this protein is Ubiquitin-associated domain-containing protein 2 (Ubac2).